Consider the following 213-residue polypeptide: Achelase-1 (213 aa).

The 213-residue stretch at 1–213 (IVGGSVTTIG…RYTSWIQSNA (213 aa)) folds into the Peptidase S1 domain. Cys26 and Cys42 are oxidised to a cystine. Active-site charge relay system residues include His41 and Asp86. Cys155 and Cys172 are oxidised to a cystine. Ser188 acts as the Charge relay system in catalysis.

The protein belongs to the peptidase S1 family. Hemolymph and saliva of the larval form (caterpillar).

The protein resides in the secreted. Its subcellular location is the extracellular space. Its activity is regulated as follows. Sensitive to serine proteinase inhibitors and thiol proteinase inhibitors. Fibrinolytic activity; shows preferential cleavage of Arg-Gly bonds in all three fibrinogen chains. Contact with the caterpillars causes severe bleeding, due the anticoagulant effect of the protein. This chain is Achelase-1, found in Lonomia achelous (Giant silkworm moth).